The sequence spans 816 residues: Sucrose synthase 2 (816 aa).

Residue Ser15 is modified to Phosphoserine. A GT-B glycosyltransferase region spans residues 280–757; it reads MVFNVVILSP…GLQRIEEKYT (478 aa).

This sequence belongs to the glycosyltransferase 1 family. Plant sucrose synthase subfamily.

It catalyses the reaction an NDP-alpha-D-glucose + D-fructose = a ribonucleoside 5'-diphosphate + sucrose + H(+). Sucrose-cleaving enzyme that provides UDP-glucose and fructose for various metabolic pathways. This is Sucrose synthase 2 (SUS1) from Zea mays (Maize).